A 204-amino-acid polypeptide reads, in one-letter code: High frequency lysogenization protein HflD homolog (204 aa).

Belongs to the HflD family.

It localises to the cytoplasm. Its subcellular location is the cell inner membrane. The protein is High frequency lysogenization protein HflD homolog of Xanthomonas campestris pv. campestris (strain ATCC 33913 / DSM 3586 / NCPPB 528 / LMG 568 / P 25).